A 121-amino-acid polypeptide reads, in one-letter code: Large ribosomal subunit protein eL34A (121 aa).

Belongs to the eukaryotic ribosomal protein eL34 family. In terms of assembly, component of the large ribosomal subunit (LSU). Mature yeast ribosomes consist of a small (40S) and a large (60S) subunit. The 40S small subunit contains 1 molecule of ribosomal RNA (18S rRNA) and 33 different proteins (encoded by 57 genes). The large 60S subunit contains 3 rRNA molecules (25S, 5.8S and 5S rRNA) and 46 different proteins (encoded by 81 genes).

The protein localises to the cytoplasm. Its function is as follows. Component of the ribosome, a large ribonucleoprotein complex responsible for the synthesis of proteins in the cell. The small ribosomal subunit (SSU) binds messenger RNAs (mRNAs) and translates the encoded message by selecting cognate aminoacyl-transfer RNA (tRNA) molecules. The large subunit (LSU) contains the ribosomal catalytic site termed the peptidyl transferase center (PTC), which catalyzes the formation of peptide bonds, thereby polymerizing the amino acids delivered by tRNAs into a polypeptide chain. The nascent polypeptides leave the ribosome through a tunnel in the LSU and interact with protein factors that function in enzymatic processing, targeting, and the membrane insertion of nascent chains at the exit of the ribosomal tunnel. The sequence is that of Large ribosomal subunit protein eL34A from Saccharomyces cerevisiae (strain ATCC 204508 / S288c) (Baker's yeast).